A 343-amino-acid chain; its full sequence is Probable dual-specificity RNA methyltransferase RlmN (343 aa).

Glutamate 91 serves as the catalytic Proton acceptor. The 230-residue stretch at 97-326 folds into the Radical SAM core domain; sequence HPDRITACIS…AEIRREKGAD (230 aa). Cysteines 104 and 331 form a disulfide. The [4Fe-4S] cluster site is built by cysteine 111, cysteine 115, and cysteine 118. S-adenosyl-L-methionine contacts are provided by residues 158–159, serine 190, 213–215, and asparagine 289; these read GE and SLH. Cysteine 331 (S-methylcysteine intermediate) is an active-site residue.

Belongs to the radical SAM superfamily. RlmN family. [4Fe-4S] cluster serves as cofactor.

The protein localises to the cytoplasm. The enzyme catalyses adenosine(2503) in 23S rRNA + 2 reduced [2Fe-2S]-[ferredoxin] + 2 S-adenosyl-L-methionine = 2-methyladenosine(2503) in 23S rRNA + 5'-deoxyadenosine + L-methionine + 2 oxidized [2Fe-2S]-[ferredoxin] + S-adenosyl-L-homocysteine. It catalyses the reaction adenosine(37) in tRNA + 2 reduced [2Fe-2S]-[ferredoxin] + 2 S-adenosyl-L-methionine = 2-methyladenosine(37) in tRNA + 5'-deoxyadenosine + L-methionine + 2 oxidized [2Fe-2S]-[ferredoxin] + S-adenosyl-L-homocysteine. Its function is as follows. Specifically methylates position 2 of adenine 2503 in 23S rRNA and position 2 of adenine 37 in tRNAs. The chain is Probable dual-specificity RNA methyltransferase RlmN from Thermotoga petrophila (strain ATCC BAA-488 / DSM 13995 / JCM 10881 / RKU-1).